Reading from the N-terminus, the 238-residue chain is Ribonuclease PH (238 aa).

The disordered stretch occupies residues 66-88 (LPRSTHTRSDREAARGKQSGRTQ). Residues arginine 86 and 124-126 (GTR) each bind phosphate.

The protein belongs to the RNase PH family. As to quaternary structure, homohexameric ring arranged as a trimer of dimers.

It carries out the reaction tRNA(n+1) + phosphate = tRNA(n) + a ribonucleoside 5'-diphosphate. Phosphorolytic 3'-5' exoribonuclease that plays an important role in tRNA 3'-end maturation. Removes nucleotide residues following the 3'-CCA terminus of tRNAs; can also add nucleotides to the ends of RNA molecules by using nucleoside diphosphates as substrates, but this may not be physiologically important. Probably plays a role in initiation of 16S rRNA degradation (leading to ribosome degradation) during starvation. The sequence is that of Ribonuclease PH from Ralstonia pickettii (strain 12J).